Reading from the N-terminus, the 249-residue chain is Exosome complex component Rrp41 (249 aa).

The protein belongs to the RNase PH family. Rrp41 subfamily. Component of the archaeal exosome complex. Forms a hexameric ring-like arrangement composed of 3 Rrp41-Rrp42 heterodimers. The hexameric ring associates with a trimer of Rrp4 and/or Csl4 subunits.

The protein resides in the cytoplasm. In terms of biological role, catalytic component of the exosome, which is a complex involved in RNA degradation. Has 3'-&gt;5' exoribonuclease activity. Can also synthesize heteromeric RNA-tails. The sequence is that of Exosome complex component Rrp41 from Thermococcus onnurineus (strain NA1).